The primary structure comprises 217 residues: Nucleoside diphosphate-linked moiety X motif 6 (217 aa).

The region spanning 42–177 (THQVGVAGAV…VAKLLLYGYN (136 aa)) is the Nudix hydrolase domain. The Nudix box signature appears at 77–98 (GLSDQGEDIGATAVREVLEETG).

It belongs to the Nudix hydrolase family. In terms of tissue distribution, detected in liver (at protein level).

It is found in the cytoplasm. The protein resides in the nucleus. Its subcellular location is the mitochondrion. May contribute to the regulation of cell proliferation. This is Nucleoside diphosphate-linked moiety X motif 6 (nudt6) from Xenopus laevis (African clawed frog).